A 201-amino-acid polypeptide reads, in one-letter code: Imidazole glycerol phosphate synthase subunit HisH 1 (201 aa).

The Glutamine amidotransferase type-1 domain maps to 1 to 201 (MIALIDYKAG…LKLLENFARL (201 aa)). Cysteine 80 functions as the Nucleophile in the catalytic mechanism. Catalysis depends on residues histidine 183 and glutamate 185.

Heterodimer of HisH and HisF.

It localises to the cytoplasm. It carries out the reaction 5-[(5-phospho-1-deoxy-D-ribulos-1-ylimino)methylamino]-1-(5-phospho-beta-D-ribosyl)imidazole-4-carboxamide + L-glutamine = D-erythro-1-(imidazol-4-yl)glycerol 3-phosphate + 5-amino-1-(5-phospho-beta-D-ribosyl)imidazole-4-carboxamide + L-glutamate + H(+). The enzyme catalyses L-glutamine + H2O = L-glutamate + NH4(+). It participates in amino-acid biosynthesis; L-histidine biosynthesis; L-histidine from 5-phospho-alpha-D-ribose 1-diphosphate: step 5/9. IGPS catalyzes the conversion of PRFAR and glutamine to IGP, AICAR and glutamate. The HisH subunit provides the glutamine amidotransferase activity that produces the ammonia necessary to HisF for the synthesis of IGP and AICAR. This is Imidazole glycerol phosphate synthase subunit HisH 1 (hisH1) from Campylobacter jejuni subsp. jejuni serotype O:23/36 (strain 81-176).